The primary structure comprises 354 residues: Heat-inducible transcription repressor HrcA (354 aa).

The protein belongs to the HrcA family.

In terms of biological role, negative regulator of class I heat shock genes (grpE-dnaK-dnaJ and groELS operons). Prevents heat-shock induction of these operons. This Herpetosiphon aurantiacus (strain ATCC 23779 / DSM 785 / 114-95) protein is Heat-inducible transcription repressor HrcA.